Reading from the N-terminus, the 362-residue chain is Mannan endo-1,4-beta-mannosidase (362 aa).

Positions 1–26 are cleaved as a signal peptide; the sequence is MFKKHTISLLIIFLLASAVLAKPIEA. Residues 38 to 349 form the GH26 domain; it reads QTTKTVMNWL…YHDSWTLNKG (312 aa). Position 131 (histidine 131) interacts with substrate. The Proton donor role is filled by glutamate 193. Substrate-binding residues include tryptophan 198 and tyrosine 268. Catalysis depends on glutamate 292, which acts as the Nucleophile. 324–325 is a substrate binding site; the sequence is WN.

It belongs to the glycosyl hydrolase 26 family. In terms of assembly, homodimer.

The protein resides in the secreted. The catalysed reaction is Random hydrolysis of (1-&gt;4)-beta-D-mannosidic linkages in mannans, galactomannans and glucomannans.. Functionally, involved in the degradation of glucomannan. Catalyzes the endo hydrolysis of beta-1,4-linked mannan, galactomannan and glucomannan. The chain is Mannan endo-1,4-beta-mannosidase from Bacillus subtilis (strain 168).